Here is a 526-residue protein sequence, read N- to C-terminus: MELTLWTYEGPPHVGAMRVASSMKDIHYVLHAPQGDTYADLLFTMIERRGQRPPVTYTTFQARDLGGDTAELVKRNITEAVERFKPKTLLVGESCTAELIQDQPGALAKGMGFDIPIVNLELPAYSKKENWGASETFYQIIRTLLKDKANEIDKINPQRWKSLGRRPKVNILGPTLLGFRCRDDVIEIQRILSEQGIDTNVVAPLGSSPDDITRLTDADINICLYHEIAETSCEWLKRNCGMEYTTTIPIGIKNTINFINEVHEKLDLPLTNQKELEHKSKLPWYSKSVDSNYLTGKRVFVFGDGTHAIAAAKIAKDELGFEVVGLGTYSREMARQVRAAAKELNIEALITNSYLEVEDAMKKASPELVLGTQMERHSAKRLGIPCSVISTPMHVQDVPARYSPQMGWEGANVIFDDWVHPLMMGLEEHLIDMFKHDFEFVDGHQSHLGHTATKGLDNKVDEHAQSNINVQKKGNIIWTDSGRAELTKVPFFVRGKVKSNTEKYALSKGLPEINDETLYDAKAYFG.

Position 36 (D36) interacts with [4Fe-4S] cluster. The active-site Proton donor is the D290. Residue 425 to 426 (GL) participates in substrate binding.

This sequence belongs to the ChlB/BchB/BchZ family. Protochlorophyllide reductase is composed of three subunits; ChlL, ChlN and ChlB. Forms a heterotetramer of two ChlB and two ChlN subunits. Requires [4Fe-4S] cluster as cofactor.

It catalyses the reaction chlorophyllide a + oxidized 2[4Fe-4S]-[ferredoxin] + 2 ADP + 2 phosphate = protochlorophyllide a + reduced 2[4Fe-4S]-[ferredoxin] + 2 ATP + 2 H2O. It participates in porphyrin-containing compound metabolism; chlorophyll biosynthesis (light-independent). Component of the dark-operative protochlorophyllide reductase (DPOR) that uses Mg-ATP and reduced ferredoxin to reduce ring D of protochlorophyllide (Pchlide) to form chlorophyllide a (Chlide). This reaction is light-independent. The NB-protein (ChlN-ChlB) is the catalytic component of the complex. The chain is Light-independent protochlorophyllide reductase subunit B from Prochlorococcus marinus subsp. pastoris (strain CCMP1986 / NIES-2087 / MED4).